The chain runs to 763 residues: Phosphoglycerol transferase I (763 aa).

Helical transmembrane passes span 4–19 (LLSF…IYAW), 26–48 (WWFA…LFAS), 76–98 (YILP…GWIL), and 105–127 (PHHF…ASPA).

The protein belongs to the OpgB family.

The protein localises to the cell inner membrane. The catalysed reaction is a phosphatidylglycerol + a membrane-derived-oligosaccharide D-glucose = a 1,2-diacyl-sn-glycerol + a membrane-derived-oligosaccharide 6-(glycerophospho)-D-glucose.. The protein operates within glycan metabolism; osmoregulated periplasmic glucan (OPG) biosynthesis. Functionally, transfers a phosphoglycerol residue from phosphatidylglycerol to the membrane-bound nascent glucan backbones. This is Phosphoglycerol transferase I from Escherichia coli O157:H7.